A 471-amino-acid polypeptide reads, in one-letter code: L-lysine 2,3-aminomutase (471 aa).

Residues His120–Ala332 form the Radical SAM core domain. [4Fe-4S] cluster-binding residues include Cys134, Cys138, and Cys141. Lys346 carries the N6-(pyridoxal phosphate)lysine modification.

It belongs to the radical SAM superfamily. KamA family. As to quaternary structure, homotetramer. [4Fe-4S] cluster is required as a cofactor. It depends on pyridoxal 5'-phosphate as a cofactor.

It catalyses the reaction L-lysine = (3S)-3,6-diaminohexanoate. The protein operates within amino-acid degradation; L-lysine degradation via acetate pathway. Catalyzes the interconversion of L-alpha-lysine and L-beta-lysine. In Bacillus subtilis (strain 168), this protein is L-lysine 2,3-aminomutase (kamA).